Here is a 455-residue protein sequence, read N- to C-terminus: Probable glycine dehydrogenase (decarboxylating) subunit 1 (455 aa).

Belongs to the GcvP family. N-terminal subunit subfamily. As to quaternary structure, the glycine cleavage system is composed of four proteins: P, T, L and H. In this organism, the P 'protein' is a heterodimer of two subunits.

The enzyme catalyses N(6)-[(R)-lipoyl]-L-lysyl-[glycine-cleavage complex H protein] + glycine + H(+) = N(6)-[(R)-S(8)-aminomethyldihydrolipoyl]-L-lysyl-[glycine-cleavage complex H protein] + CO2. Functionally, the glycine cleavage system catalyzes the degradation of glycine. The P protein binds the alpha-amino group of glycine through its pyridoxal phosphate cofactor; CO(2) is released and the remaining methylamine moiety is then transferred to the lipoamide cofactor of the H protein. The polypeptide is Probable glycine dehydrogenase (decarboxylating) subunit 1 (Francisella tularensis subsp. mediasiatica (strain FSC147)).